We begin with the raw amino-acid sequence, 423 residues long: Methanol:N,N-dimethyl-4-nitrosoaniline oxidoreductase (423 aa).

This sequence belongs to the iron-containing alcohol dehydrogenase family. Homodecamer. It depends on Mg(2+) as a cofactor. Zn(2+) is required as a cofactor. NADPH serves as cofactor.

It carries out the reaction methanol + A = formaldehyde + AH2. Its function is as follows. Catalyzes the oxidation of methanol to yield formaldehyde. While the in vivo electron acceptor is not known, N,N-dimethyl-4-nitrosoaniline (NDMA) can serve this function in vitro and is reduced to 4-(hydroxylamino)-N,N-dimethylaniline. It is also able to use ethanol and formaldehyde with an activity comparable to methanol, and has a weak activity with methylamine as substrate. The chain is Methanol:N,N-dimethyl-4-nitrosoaniline oxidoreductase from Mycobacterium sp. (strain DSM 3803 / JC1).